The primary structure comprises 161 residues: Lipoprotein signal peptidase (161 aa).

3 helical membrane-spanning segments follow: residues 6-26 (ILFL…KFYV), 67-87 (GLFF…YLIK), and 90-110 (VSDL…MGNL). Residues Asp121 and Asp139 contribute to the active site. The chain crosses the membrane as a helical span at residues 134-154 (AFNIADTAISIGVLFLVVDMI).

The protein belongs to the peptidase A8 family.

Its subcellular location is the cell inner membrane. The catalysed reaction is Release of signal peptides from bacterial membrane prolipoproteins. Hydrolyzes -Xaa-Yaa-Zaa-|-(S,diacylglyceryl)Cys-, in which Xaa is hydrophobic (preferably Leu), and Yaa (Ala or Ser) and Zaa (Gly or Ala) have small, neutral side chains.. The protein operates within protein modification; lipoprotein biosynthesis (signal peptide cleavage). This protein specifically catalyzes the removal of signal peptides from prolipoproteins. This chain is Lipoprotein signal peptidase, found in Syntrophus aciditrophicus (strain SB).